The following is a 382-amino-acid chain: Protein-arginine rhamnosyltransferase (382 aa).

Residue 18–19 (FG) participates in dTDP binding. D20 (proton acceptor) is an active-site residue. Residues D20, Y187, 250–252 (VPQ), and 268–272 (RGEDS) contribute to the dTDP-beta-L-rhamnose site. DTDP contacts are provided by residues Y187, 250–252 (VPQ), and 268–272 (RGEDS). The active site involves E270.

The protein belongs to the glycosyltransferase 104 family.

It catalyses the reaction dTDP-beta-L-rhamnose + L-arginyl-[protein] = N(omega)-(alpha-L-rhamnosyl)-L-arginyl-[protein] + dTDP + H(+). Functionally, protein-arginine rhamnosyltransferase that catalyzes the transfer of a single rhamnose to elongation factor P (EF-P) on 'Lys-32', a modification required for EF-P-dependent rescue of polyproline stalled ribosomes. This is Protein-arginine rhamnosyltransferase from Neisseria meningitidis serogroup B / serotype 15 (strain H44/76).